The following is a 260-amino-acid chain: Thiazole synthase (260 aa).

Residue Lys-96 is the Schiff-base intermediate with DXP of the active site. 1-deoxy-D-xylulose 5-phosphate is bound by residues Gly-157, 184 to 185 (AG), and 206 to 207 (NT).

Belongs to the ThiG family. As to quaternary structure, homotetramer. Forms heterodimers with either ThiH or ThiS.

The protein resides in the cytoplasm. It carries out the reaction [ThiS sulfur-carrier protein]-C-terminal-Gly-aminoethanethioate + 2-iminoacetate + 1-deoxy-D-xylulose 5-phosphate = [ThiS sulfur-carrier protein]-C-terminal Gly-Gly + 2-[(2R,5Z)-2-carboxy-4-methylthiazol-5(2H)-ylidene]ethyl phosphate + 2 H2O + H(+). The protein operates within cofactor biosynthesis; thiamine diphosphate biosynthesis. Functionally, catalyzes the rearrangement of 1-deoxy-D-xylulose 5-phosphate (DXP) to produce the thiazole phosphate moiety of thiamine. Sulfur is provided by the thiocarboxylate moiety of the carrier protein ThiS. In vitro, sulfur can be provided by H(2)S. In Nitrobacter winogradskyi (strain ATCC 25391 / DSM 10237 / CIP 104748 / NCIMB 11846 / Nb-255), this protein is Thiazole synthase.